The sequence spans 717 residues: DNA polymerase iota (717 aa).

The segment at 1–22 (MEPLHAGAAGSSRAVCSQGPPT) is disordered. The UmuC domain occupies 30 to 243 (IVHVDLDCFY…NHIKEIPGIG (214 aa)). Residues Asp34 and Leu35 each contribute to the Mg(2+) site. The a 2'-deoxyribonucleoside 5'-triphosphate site is built by Tyr39 and Arg71. Asp126 contacts Mg(2+). Glu127 serves as the catalytic Proton acceptor. DNA-binding regions lie at residues 300–307 (QSFSEEDT) and 343–360 (RLVI…ESRQ). The Ubiquitin-binding 1 (UBM1) signature appears at 500 to 517 (VDQEVFKQLPADIQEEIL). Disordered regions lie at residues 549-589 (QMQA…SHPS), 603-622 (KDEQ…FSST), and 644-687 (HRTV…DIDP). Positions 575–589 (PGTSGLSPGSTSHPS) are enriched in low complexity. Composition is skewed to polar residues over residues 607–622 (TSQG…FSST) and 652–662 (QTATASHQGLE). Residues 665–679 (QGLESRELDSAEEKL) show a composition bias toward basic and acidic residues. The Ubiquitin-binding 2 (UBM2) signature appears at 685–702 (IDPQVFYELPEEVQKELM).

It belongs to the DNA polymerase type-Y family. In terms of assembly, interacts with POLH. Interacts with REV1. Interacts with ubiquitin. The cofactor is Mg(2+). Requires Mn(2+) as cofactor. Post-translationally, monoubiquitinated. Protein monoubiquitination prevents POLI binding to ubiquitin via the ubiquitin-binding motif 1 and ubiquitin-binding motif 2. As to expression, detected in testis, and at very low levels in spleen, lung and brain. Detected in round spermatids, but not in prophase spermatocytes.

It is found in the nucleus. The catalysed reaction is DNA(n) + a 2'-deoxyribonucleoside 5'-triphosphate = DNA(n+1) + diphosphate. Its function is as follows. Error-prone DNA polymerase specifically involved in DNA repair. Plays an important role in translesion synthesis, where the normal high-fidelity DNA polymerases cannot proceed and DNA synthesis stalls. Favors Hoogsteen base-pairing in the active site. Inserts the correct base with high-fidelity opposite an adenosine template. Exhibits low fidelity and efficiency opposite a thymidine template, where it will preferentially insert guanosine. May play a role in hypermutation of immunoglobulin genes. Forms a Schiff base with 5'-deoxyribose phosphate at abasic sites, but may not have lyase activity. This is DNA polymerase iota (Poli) from Mus musculus (Mouse).